We begin with the raw amino-acid sequence, 434 residues long: Glutamyl-tRNA reductase (434 aa).

Substrate contacts are provided by residues 49–52 (TCNR), Ser-109, 114–116 (EPQ), and Gln-120. Residue Cys-50 is the Nucleophile of the active site. NADP(+) is bound at residue 189 to 194 (GAGEMC).

This sequence belongs to the glutamyl-tRNA reductase family. In terms of assembly, homodimer.

It carries out the reaction (S)-4-amino-5-oxopentanoate + tRNA(Glu) + NADP(+) = L-glutamyl-tRNA(Glu) + NADPH + H(+). It participates in porphyrin-containing compound metabolism; protoporphyrin-IX biosynthesis; 5-aminolevulinate from L-glutamyl-tRNA(Glu): step 1/2. Its function is as follows. Catalyzes the NADPH-dependent reduction of glutamyl-tRNA(Glu) to glutamate 1-semialdehyde (GSA). The polypeptide is Glutamyl-tRNA reductase (Geobacter metallireducens (strain ATCC 53774 / DSM 7210 / GS-15)).